The primary structure comprises 611 residues: 1,4-alpha-glucan branching enzyme GlgB (611 aa).

Asp-302 functions as the Nucleophile in the catalytic mechanism. Residue Glu-343 is the Proton donor of the active site.

It belongs to the glycosyl hydrolase 13 family. GlgB subfamily. In terms of assembly, monomer.

It catalyses the reaction Transfers a segment of a (1-&gt;4)-alpha-D-glucan chain to a primary hydroxy group in a similar glucan chain.. It functions in the pathway glycan biosynthesis; glycogen biosynthesis. In terms of biological role, catalyzes the formation of the alpha-1,6-glucosidic linkages in glycogen by scission of a 1,4-alpha-linked oligosaccharide from growing alpha-1,4-glucan chains and the subsequent attachment of the oligosaccharide to the alpha-1,6 position. This chain is 1,4-alpha-glucan branching enzyme GlgB, found in Fusobacterium nucleatum subsp. nucleatum (strain ATCC 25586 / DSM 15643 / BCRC 10681 / CIP 101130 / JCM 8532 / KCTC 2640 / LMG 13131 / VPI 4355).